A 931-amino-acid polypeptide reads, in one-letter code: MSPCGYYSKWRNRDRPEYRRNLRFRRFFSSIHPNAAAGSGFNGPGVFITSVTGVWLCFLCIFSMFVTAVVSVSPSSFYESLQVEPTQSEDITRSAHLGDGDEIREAIHKSQDAETKPTFYVCPPPTGSTIVRLEPPRTCPDYHLGKNFTEGIAVVYKENIAAYKFKATVYYKDVIVSTAWAGSSYTQITNRYADRVPIPVSEITDTIDKFGKCSSKATYVRNNHKVEAFNEDKNPQDMPLIASKYNSVGSKAWHTTNDTYMVAGTPGTYRTGTSVNCIIEEVEARSIFPYDSFGLSTGDIIYMSPFFGLRDGAYREHSNYAMDRFHQFEGYRQRDLDTRALLEPAARNFLVTPHLTVGWNWKPKRTEVCSLVKWREVEDVVRDEYAHNFRFTMKTLSTTFISETNEFNLNQIHLSQCVKEEARAIINRIYTTRYNSSHVRTGDIQTYLARGGFVVVFQPLLSNSLARLYLQELVRENTNHSPQKHPTRNTRSRRSVPVELRANRTITTTSSVEFAMLQFTYDHIQEHVNEMLARISSSWCQLQNRERALWSGLFPINPSALASTILDQRVKARILGDVISVSNCPELGSDTRIILQNSMRVSGSTTRCYSRPLISIVSLNGSGTVEGQLGTDNELIMSRDLLEPCVANHKRYFLFGHHYVYYEDYRYVREIAVHDVGMISTYVDLNLTLLKDREFMPLQVYTRDELRDTGLLDYSEIQRRNQMHSLRFYDIDKVVQYDSGTAIMQGMAQFFQGLGTAGQAVGHVVLGATGALLSTVHGFTTFLSNPFGALAVGLLVLAGLVAAFFAYRYVLKLKTSPMKALYPLTTKGLKQLPEGMDPFAEKPNATDTPIEEIGDSQNTEPSVNSGFDPDKFREAQEMIKYMTLVSAAERQESKARKKNKTSALLTSRLTGLALRNRRGYSRVRTENVTGV.

The first 71 residues, 1–71 (MSPCGYYSKW…FSMFVTAVVS (71 aa)), serve as a signal peptide directing secretion. The Virion surface portion of the chain corresponds to 72–786 (VSPSSFYESL…HGFTTFLSNP (715 aa)). Disulfide bonds link Cys-122/Cys-584, Cys-139/Cys-540, Cys-213/Cys-277, Cys-369/Cys-417, and Cys-608/Cys-645. Asn-147 is a glycosylation site (N-linked (GlcNAc...) asparagine; by host). The segment at 179–185 (AWAGSSY) is involved in fusion and/or binding to host membrane. Asn-257 carries N-linked (GlcNAc...) asparagine; by host glycosylation. An involved in fusion and/or binding to host membrane region spans residues 264-271 (GTPGTYRT). Asn-435, Asn-503, Asn-620, and Asn-686 each carry an N-linked (GlcNAc...) asparagine; by host glycan. Hydrophobic membrane proximal region regions lie at residues 731-784 (IDKV…TFLS) and 764-784 (VVLG…TFLS). Residues 787 to 807 (FGALAVGLLVLAGLVAAFFAY) traverse the membrane as a helical segment. The Intravirion segment spans residues 808–931 (RYVLKLKTSP…RVRTENVTGV (124 aa)). The Golgi targeting signature appears at 881–884 (YMTL). Residues 920–923 (YSRV) carry the Internalization motif motif.

Belongs to the herpesviridae glycoprotein B family. As to quaternary structure, homotrimer; disulfide-linked. Binds to heparan sulfate proteoglycans. Interacts with gH/gL heterodimer. A proteolytic cleavage by host furin generates two subunits that remain linked by disulfide bonds.

The protein resides in the virion membrane. It is found in the host cell membrane. It localises to the host endosome membrane. Its subcellular location is the host Golgi apparatus membrane. Its function is as follows. Envelope glycoprotein that forms spikes at the surface of virion envelope. Essential for the initial attachment to heparan sulfate moieties of the host cell surface proteoglycans. Involved in fusion of viral and cellular membranes leading to virus entry into the host cell. Following initial binding to its host receptors, membrane fusion is mediated by the fusion machinery composed at least of gB and the heterodimer gH/gL. May be involved in the fusion between the virion envelope and the outer nuclear membrane during virion egress. This Varicella-zoster virus (strain Oka vaccine) (HHV-3) protein is Envelope glycoprotein B.